Here is a 433-residue protein sequence, read N- to C-terminus: 23S rRNA (uracil(1939)-C(5))-methyltransferase RlmD (433 aa).

The TRAM domain maps to 10–68 (RTTTRQIITVSVNDLDSFGQGVARHNGKTLFIPGLLPQENAEVTVTEDKKQYARAKVVR). Positions 81, 87, 90, and 162 each coordinate [4Fe-4S] cluster. S-adenosyl-L-methionine contacts are provided by glutamine 265, phenylalanine 294, asparagine 299, glutamate 315, asparagine 342, and aspartate 363. Cysteine 389 serves as the catalytic Nucleophile.

The protein belongs to the class I-like SAM-binding methyltransferase superfamily. RNA M5U methyltransferase family. RlmD subfamily.

The catalysed reaction is uridine(1939) in 23S rRNA + S-adenosyl-L-methionine = 5-methyluridine(1939) in 23S rRNA + S-adenosyl-L-homocysteine + H(+). In terms of biological role, catalyzes the formation of 5-methyl-uridine at position 1939 (m5U1939) in 23S rRNA. The chain is 23S rRNA (uracil(1939)-C(5))-methyltransferase RlmD from Escherichia coli (strain UTI89 / UPEC).